The following is a 650-amino-acid chain: Chaperone protein HtpG (650 aa).

The tract at residues Met-1–Arg-356 is a; substrate-binding. Positions Ala-222 to Arg-245 are disordered. A b region spans residues Glu-357–Lys-572. A c region spans residues Met-573 to Leu-650.

This sequence belongs to the heat shock protein 90 family. In terms of assembly, homodimer.

The protein localises to the cytoplasm. Its function is as follows. Molecular chaperone. Has ATPase activity. The chain is Chaperone protein HtpG from Frankia casuarinae (strain DSM 45818 / CECT 9043 / HFP020203 / CcI3).